The chain runs to 269 residues: Holocytochrome-c synthase (269 aa).

A disordered region spans residues 1 to 72 (MGWFWADQKT…ASKQPGQKMD (72 aa)). HRM repeat units follow at residues 25-30 (GCPVMH) and 41-46 (ECPVMQ).

This sequence belongs to the cytochrome c-type heme lyase family.

It localises to the mitochondrion inner membrane. The protein resides in the mitochondrion intermembrane space. It catalyses the reaction holo-[cytochrome c] = apo-[cytochrome c] + heme b. Functionally, lyase that catalyzes the covalent linking of the heme group to the cytochrome C apoprotein to produce the mature functional cytochrome. The chain is Holocytochrome-c synthase (CYC3) from Saccharomyces cerevisiae (strain ATCC 204508 / S288c) (Baker's yeast).